The sequence spans 118 residues: Probable FK506-binding protein (118 aa).

In terms of domain architecture, PPIase FKBP-type spans 33–118; sequence GGEVEVHYVG…LVFIIDLISA (86 aa).

This sequence belongs to the FKBP-type PPIase family.

It catalyses the reaction [protein]-peptidylproline (omega=180) = [protein]-peptidylproline (omega=0). PPIases accelerate the folding of proteins. The sequence is that of Probable FK506-binding protein from Corynebacterium glutamicum (strain ATCC 13032 / DSM 20300 / JCM 1318 / BCRC 11384 / CCUG 27702 / LMG 3730 / NBRC 12168 / NCIMB 10025 / NRRL B-2784 / 534).